Consider the following 548-residue polypeptide: Membrane protein insertase YidC (548 aa).

A helical transmembrane segment spans residues 6–26 (NLLVIALLFVSFMIWQAWEQD). Residues 28-56 (NPQPQTQQTTQTTTTAAGSAADQGVPASG) are disordered. Over residues 29–42 (PQPQTQQTTQTTTT) the composition is skewed to low complexity. 4 helical membrane passes run 350–370 (FVGNWGFSIIIITFIVRGIMY), 424–444 (FPLIIQMPIFLALYYMLMGSI), 458–478 (LSAQDPYYILPILMGVTMFFI), and 499–519 (PVIFTVFFLWFPSGLVLYYIV).

It belongs to the OXA1/ALB3/YidC family. Type 1 subfamily. Interacts with the Sec translocase complex via SecD. Specifically interacts with transmembrane segments of nascent integral membrane proteins during membrane integration.

The protein resides in the cell inner membrane. Functionally, required for the insertion and/or proper folding and/or complex formation of integral membrane proteins into the membrane. Involved in integration of membrane proteins that insert both dependently and independently of the Sec translocase complex, as well as at least some lipoproteins. Aids folding of multispanning membrane proteins. The protein is Membrane protein insertase YidC of Salmonella typhimurium (strain LT2 / SGSC1412 / ATCC 700720).